A 313-amino-acid polypeptide reads, in one-letter code: Ribosomal RNA small subunit methyltransferase H (313 aa).

S-adenosyl-L-methionine is bound by residues 34-36, Asp54, Phe81, Asp102, and Gln109; that span reads GGH. The interval 289–313 is disordered; the sequence is IAGPEETDRNPRARSAKLRAAEKLG.

It belongs to the methyltransferase superfamily. RsmH family.

It localises to the cytoplasm. The catalysed reaction is cytidine(1402) in 16S rRNA + S-adenosyl-L-methionine = N(4)-methylcytidine(1402) in 16S rRNA + S-adenosyl-L-homocysteine + H(+). In terms of biological role, specifically methylates the N4 position of cytidine in position 1402 (C1402) of 16S rRNA. This chain is Ribosomal RNA small subunit methyltransferase H, found in Trichlorobacter lovleyi (strain ATCC BAA-1151 / DSM 17278 / SZ) (Geobacter lovleyi).